The sequence spans 369 residues: Aminomethyltransferase (369 aa).

Belongs to the GcvT family. As to quaternary structure, the glycine cleavage system is composed of four proteins: P, T, L and H.

It carries out the reaction N(6)-[(R)-S(8)-aminomethyldihydrolipoyl]-L-lysyl-[protein] + (6S)-5,6,7,8-tetrahydrofolate = N(6)-[(R)-dihydrolipoyl]-L-lysyl-[protein] + (6R)-5,10-methylene-5,6,7,8-tetrahydrofolate + NH4(+). Its function is as follows. The glycine cleavage system catalyzes the degradation of glycine. This Synechococcus sp. (strain WH7803) protein is Aminomethyltransferase.